The primary structure comprises 111 residues: Type III endosome membrane protein TEMP (111 aa).

Over 1-27 (MIGGNTTIISGAINASTEAPGLGTGGR) the chain is Extracellular. Asn-5 carries an N-linked (GlcNAc...) asparagine glycan. The chain crosses the membrane as a helical; Signal-anchor for type III membrane protein span at residues 28–48 (AWPVLVGVVLGAVVLSILIAL). At 49-111 (AAKCHLCRRY…TTGSRDHFSL (63 aa)) the chain is on the cytoplasmic side. Positions 64 to 111 (HRPLSSAGGGNRPPVGEDEDDDGFIEDNYIQPGAGEMETTGSRDHFSL) are disordered. The span at 79-88 (GEDEDDDGFI) shows a compositional bias: acidic residues.

As to expression, expressed in stomach, kidney, large and small intestine and kidney.

The protein resides in the membrane. Its subcellular location is the early endosome. It localises to the recycling endosome. The protein localises to the cell membrane. Functionally, may be involved in membrane trafficking between endosomes and plasma membrane. The protein is Type III endosome membrane protein TEMP of Mus musculus (Mouse).